Here is a 171-residue protein sequence, read N- to C-terminus: ATP synthase subunit b (171 aa).

Residues 32-52 traverse the membrane as a helical segment; it reads FFAVLLIFLIVLGVIAKWVVP.

The protein belongs to the ATPase B chain family. In terms of assembly, F-type ATPases have 2 components, F(1) - the catalytic core - and F(0) - the membrane proton channel. F(1) has five subunits: alpha(3), beta(3), gamma(1), delta(1), epsilon(1). F(0) has three main subunits: a(1), b(2) and c(10-14). The alpha and beta chains form an alternating ring which encloses part of the gamma chain. F(1) is attached to F(0) by a central stalk formed by the gamma and epsilon chains, while a peripheral stalk is formed by the delta and b chains.

It is found in the cell membrane. Its function is as follows. F(1)F(0) ATP synthase produces ATP from ADP in the presence of a proton or sodium gradient. F-type ATPases consist of two structural domains, F(1) containing the extramembraneous catalytic core and F(0) containing the membrane proton channel, linked together by a central stalk and a peripheral stalk. During catalysis, ATP synthesis in the catalytic domain of F(1) is coupled via a rotary mechanism of the central stalk subunits to proton translocation. Component of the F(0) channel, it forms part of the peripheral stalk, linking F(1) to F(0). The chain is ATP synthase subunit b from Mycolicibacterium gilvum (strain PYR-GCK) (Mycobacterium gilvum (strain PYR-GCK)).